We begin with the raw amino-acid sequence, 772 residues long: Delta-like protein A (772 aa).

Positions 1-20 (MGRHLLLLLFSILYMLLCQA) are cleaved as a signal peptide. Over 21–536 (SSSGVFELKL…SQIASDVPWT (516 aa)) the chain is Extracellular. Positions 179–223 (FVCDEHYYGEGCSVFCRPRDDAFGHFTCGERGEIICDAGWKGQYC) constitute a DSL domain. Disulfide bonds link C181–C190, C194–C206, C214–C223, C228–C239, C232–C245, C259–C270, C265–C276, C278–C287, C294–C306, C300–C316, C318–C327, C334–C345, C339–C354, C356–C365, C372–C383, C377–C393, C395–C404, C411–C422, C416–C431, C433–C442, C449–C460, C454–C469, C471–C480, C487–C498, C492–C507, and C509–C518. EGF-like domains lie at 225 to 257 (EPIC…RYCD), 257 to 288 (DECI…LFCN), and 290 to 328 (DLNY…ASCE). Residues 330 to 366 (EVNECTGNPCRNGGSCTDMENTYSCTCPPGFYGKNCE) enclose the EGF-like 4; calcium-binding domain. 4 consecutive EGF-like domains span residues 368–405 (SAMT…FNCE), 407–443 (KIDH…MNCD), 445–481 (AGDE…RNCS), and 483–519 (PVSR…RNCQ). N479 carries N-linked (GlcNAc...) asparagine glycosylation. Residues 537–557 (AVGSGVLLVLLLVVACAVVVV) traverse the membrane as a helical segment. Topologically, residues 558 to 772 (CVRSKVQQRR…KDECVIATEV (215 aa)) are cytoplasmic. Residues 688 to 722 (EEKRRKRLKSDASEKSKYSESRYSESKYSESKYSE) are disordered. Over residues 696-722 (KSDASEKSKYSESRYSESKYSESKYSE) the composition is skewed to basic and acidic residues.

As to quaternary structure, interacts with mib. Post-translationally, ubiquitinated by mib, leading to its endocytosis and subsequent degradation. Ubiquitinated by the ECS(ASB11) complex, leading to its degradation by the proteasome. As to expression, expressed in nervous system. In the developing nervous system, it is expressed in overlapping regions with deltaB (dlb) and deltaD (dld); in the neural plate, dla is expressed in patches of contiguous cells with dld, while dlb is confined to scattered cells within those patches that will differentiate as neurons. In 24 hours embryos, expressed in the hindbrain in stripes adjacent to rhombomere boundaries, but not in the actual boundary cells. During gastrulation and tail formation, expressed in embryonic midline cells. Expressed in hair cells of inner ear.

Its subcellular location is the membrane. In terms of biological role, acts as a ligand for Notch receptors and is involved in primary neurogenesis. Can activate Notch receptors, thereby playing a key role in lateral inhibition, a process that prevents the immediate neighbors of each nascent neural cell from simultaneously embarking on neural differentiation. Required for boundary formation during segmentation of the hindbrain. Required for midline cell fate specification prior to germ layer formation; regulates specification of floorplate, notochord and hypochord. In inner ear, it prevents adjacent cells from adopting the same cell fate. Plays a role in angiogenesis. The protein is Delta-like protein A (dla) of Danio rerio (Zebrafish).